The chain runs to 219 residues: Oligoribonuclease (219 aa).

Positions 30 to 193 (LVWLDMEMTG…ADIVESIEEL (164 aa)) constitute an Exonuclease domain. Residue tyrosine 151 is part of the active site.

It belongs to the oligoribonuclease family.

Its subcellular location is the cytoplasm. Its function is as follows. 3'-to-5' exoribonuclease specific for small oligoribonucleotides. This is Oligoribonuclease from Ralstonia nicotianae (strain ATCC BAA-1114 / GMI1000) (Ralstonia solanacearum).